The primary structure comprises 444 residues: Methylenetetrahydrofolate--tRNA-(uracil-5-)-methyltransferase TrmFO (444 aa).

10–15 (GAGLAG) contributes to the FAD binding site.

The protein belongs to the MnmG family. TrmFO subfamily. The cofactor is FAD.

It localises to the cytoplasm. It carries out the reaction uridine(54) in tRNA + (6R)-5,10-methylene-5,6,7,8-tetrahydrofolate + NADH + H(+) = 5-methyluridine(54) in tRNA + (6S)-5,6,7,8-tetrahydrofolate + NAD(+). The enzyme catalyses uridine(54) in tRNA + (6R)-5,10-methylene-5,6,7,8-tetrahydrofolate + NADPH + H(+) = 5-methyluridine(54) in tRNA + (6S)-5,6,7,8-tetrahydrofolate + NADP(+). Its function is as follows. Catalyzes the folate-dependent formation of 5-methyl-uridine at position 54 (M-5-U54) in all tRNAs. This chain is Methylenetetrahydrofolate--tRNA-(uracil-5-)-methyltransferase TrmFO, found in Streptococcus gordonii (strain Challis / ATCC 35105 / BCRC 15272 / CH1 / DL1 / V288).